The following is a 158-amino-acid chain: Pathogenesis-related protein 1 (158 aa).

It belongs to the BetVI family.

Its subcellular location is the cytoplasm. This is Pathogenesis-related protein 1 (PR1) from Asparagus officinalis (Garden asparagus).